Here is a 200-residue protein sequence, read N- to C-terminus: MTSKIFSPKISAVIESLRKLPTIGKKSSQRLALYLLDKSPETARAIANSLLDATANIKKCVYCQALTEDDVCNICSNTNRDDTKLCIIESMLDMIAIEEAGIYRGKYFVLNGRISPLDGVGPSELKLDILQRIIADRKIDEVILAISPTVEGETTAHFISQMIAKDIKISRIGFGVPFGGELEYLDQQTLLHAFNARTNI.

The C4-type zinc finger occupies 60–75; it reads CVYCQALTEDDVCNIC. A Toprim domain is found at 83 to 177; that stretch reads TKLCIIESML…KISRIGFGVP (95 aa).

This sequence belongs to the RecR family.

Functionally, may play a role in DNA repair. It seems to be involved in an RecBC-independent recombinational process of DNA repair. It may act with RecF and RecO. The chain is Recombination protein RecR from Francisella tularensis subsp. novicida (strain U112).